Consider the following 85-residue polypeptide: NAD(P)H-quinone oxidoreductase subunit O (85 aa).

Belongs to the complex I NdhO subunit family. As to quaternary structure, NDH-1 can be composed of about 15 different subunits; different subcomplexes with different compositions have been identified which probably have different functions.

The protein localises to the cellular thylakoid membrane. The enzyme catalyses a plastoquinone + NADH + (n+1) H(+)(in) = a plastoquinol + NAD(+) + n H(+)(out). It catalyses the reaction a plastoquinone + NADPH + (n+1) H(+)(in) = a plastoquinol + NADP(+) + n H(+)(out). NDH-1 shuttles electrons from an unknown electron donor, via FMN and iron-sulfur (Fe-S) centers, to quinones in the respiratory and/or the photosynthetic chain. The immediate electron acceptor for the enzyme in this species is believed to be plastoquinone. Couples the redox reaction to proton translocation, and thus conserves the redox energy in a proton gradient. Cyanobacterial NDH-1 also plays a role in inorganic carbon-concentration. This Synechococcus sp. (strain WH7803) protein is NAD(P)H-quinone oxidoreductase subunit O.